A 130-amino-acid polypeptide reads, in one-letter code: Fluoride-specific ion channel FluC (130 aa).

4 helical membrane-spanning segments follow: residues glycine 2 to leucine 22, glycine 36 to isoleucine 56, phenylalanine 71 to isoleucine 91, and isoleucine 100 to leucine 120. Residues glycine 79 and threonine 82 each contribute to the Na(+) site.

The protein belongs to the fluoride channel Fluc/FEX (TC 1.A.43) family.

Its subcellular location is the cell inner membrane. The catalysed reaction is fluoride(in) = fluoride(out). Na(+) is not transported, but it plays an essential structural role and its presence is essential for fluoride channel function. Fluoride-specific ion channel. Important for reducing fluoride concentration in the cell, thus reducing its toxicity. The polypeptide is Fluoride-specific ion channel FluC (Francisella tularensis subsp. mediasiatica (strain FSC147)).